The following is a 493-amino-acid chain: uncharacterized protein (493 aa).

The chain crosses the membrane as a helical span at residues 10-30 (LVPSTRFALSLVMFFGCLVTY). 3 N-linked (GlcNAc...) asparagine glycosylation sites follow: N35, N47, and N69. 6 helical membrane-spanning segments follow: residues 85–105 (MVLS…GHLA), 112–132 (RVVF…PVAA), 144–164 (AAIG…WSVW), 175–195 (GVTY…SGFL), 205–225 (PSIF…WWYV), and 272–292 (AVWA…TMLV). N305 is a glycosylation site (N-linked (GlcNAc...) asparagine). The next 4 membrane-spanning stretches (helical) occupy residues 311–331 (AVAS…GVLA), 348–368 (AAML…GYCG), 375–395 (VIIF…GFVV), and 406–426 (GTVM…SPAV). N-linked (GlcNAc...) asparagine glycosylation is present at N433. A helical membrane pass occupies residues 441-461 (MVLWLTAGILTIGALLFSIFA).

The protein belongs to the major facilitator superfamily. Sodium/anion cotransporter family.

It localises to the membrane. This is an uncharacterized protein from Caenorhabditis elegans.